The sequence spans 222 residues: Germin-like protein 11-1 (222 aa).

A signal peptide spans 1-23; sequence MKLSTVLCCYLLLLGLFAPEIIS. Cys-32 and Cys-49 are oxidised to a cystine. The 124-residue stretch at 72–195 folds into the Cupin type-1 domain; sequence DNMVRSSANI…AMFAPDSEVA (124 aa). Residues His-111, His-113, Glu-118, and His-157 each contribute to the Mn(2+) site.

Belongs to the germin family. As to quaternary structure, oligomer (believed to be a pentamer but probably hexamer).

It localises to the secreted. Its subcellular location is the extracellular space. It is found in the apoplast. May play a role in plant defense. Probably has no oxalate oxidase activity even if the active site is conserved. The protein is Germin-like protein 11-1 of Oryza sativa subsp. japonica (Rice).